The sequence spans 389 residues: Chalcone synthase A (389 aa).

Residue C164 is part of the active site.

The protein belongs to the thiolase-like superfamily. Chalcone/stilbene synthases family. In terms of tissue distribution, major expressed member of the gene family in various floral tissues and in seedlings treated with UV light. It is relatively low expressed in tissue culture material.

It catalyses the reaction (E)-4-coumaroyl-CoA + 3 malonyl-CoA + 3 H(+) = 2',4,4',6'-tetrahydroxychalcone + 3 CO2 + 4 CoA. The protein operates within secondary metabolite biosynthesis; flavonoid biosynthesis. Functionally, the primary product of this enzyme is 4,2',4',6'-tetrahydroxychalcone (also termed naringenin-chalcone or chalcone) which can under specific conditions spontaneously isomerize into naringenin. The sequence is that of Chalcone synthase A (CHSA) from Petunia hybrida (Petunia).